A 175-amino-acid polypeptide reads, in one-letter code: MSSQIRQNYSTEVEAAVNRLVNLYLRASYTYLSLGFYFDRDDVALEGVCHFFRELAEEKREGAERLLKMQNQRGGRALFQDLQKPSQDEWGTTLDAMKAAIVLEKSLNQALLDLHALGSAQADPHLCDFLESHFLDEEVKLIKKMGDHLTNIQRLVGSQAGLGEYLFERLTLKHD.

N-acetylserine is present on Ser-2. One can recognise a Ferritin-like diiron domain in the interval 7–156 (QNYSTEVEAA…DHLTNIQRLV (150 aa)). The Fe cation site is built by Glu-54, Glu-57, Glu-58, Glu-61, and Glu-64. The catalytic site for iron oxidation stretch occupies residues 54–61 (ELAEEKRE).

This sequence belongs to the ferritin family. Oligomer of 24 subunits. There are two types of subunits: L (light) chain and H (heavy) chain. The major chain can be light or heavy, depending on the species and tissue type. The functional molecule forms a roughly spherical shell with a diameter of 12 nm and contains a central cavity into which the insoluble mineral iron core is deposited. Interacts with NCOA4.

It is found in the cytoplasmic vesicle. The protein localises to the autophagosome. The protein resides in the cytoplasm. Its subcellular location is the autolysosome. Stores iron in a soluble, non-toxic, readily available form. Important for iron homeostasis. Iron is taken up in the ferrous form and deposited as ferric hydroxides after oxidation. Also plays a role in delivery of iron to cells. Mediates iron uptake in capsule cells of the developing kidney. Delivery to lysosomes by the cargo receptor NCOA4 for autophagic degradation and release or iron. The chain is Ferritin light chain (FTL) from Equus caballus (Horse).